A 28-amino-acid chain; its full sequence is Cyclotide vodo I2 (28 aa).

3 disulfides stabilise this stretch: cysteine 4/cysteine 18, cysteine 8/cysteine 20, and cysteine 13/cysteine 25.

This is a cyclic peptide. Post-translationally, contains 3 disulfide bonds.

Probably participates in a plant defense mechanism. This chain is Cyclotide vodo I2, found in Viola odorata (Sweet violet).